The following is a 71-amino-acid chain: DNA-directed RNA polymerase subunit epsilon (71 aa).

This sequence belongs to the RNA polymerase subunit epsilon family. RNAP is composed of a core of 2 alpha, a beta and a beta' subunit. The core is associated with a delta subunit, and at least one of epsilon or omega. When a sigma factor is associated with the core the holoenzyme is formed, which can initiate transcription.

The catalysed reaction is RNA(n) + a ribonucleoside 5'-triphosphate = RNA(n+1) + diphosphate. Its function is as follows. A non-essential component of RNA polymerase (RNAP). This is DNA-directed RNA polymerase subunit epsilon from Staphylococcus saprophyticus subsp. saprophyticus (strain ATCC 15305 / DSM 20229 / NCIMB 8711 / NCTC 7292 / S-41).